The primary structure comprises 764 residues: Sesterfisherol synthase (764 aa).

The tract at residues 2–331 (EVWEHSRPIA…SPRHHAWRNN (330 aa)) is terpene cyclase. Asp-95 serves as a coordination point for Mg(2+). Substrate-binding positions include Asp-95, 187–190 (RRDD), Asn-231, 235–239 (SFDRE), and 324–325 (RH). The DDXXD 1 signature appears at 95-99 (DDGYE). Residues 231 to 239 (NDYWSFDRE) carry the NSE/DTE motif. A prenyltransferase region spans residues 332–759 (SRNGLKPANH…PMLRLLLEKL (428 aa)). The disordered stretch occupies residues 347 to 372 (LITPSNNLNSSKGSEEQMQDSDNGTR). The span at 348 to 358 (ITPSNNLNSSK) shows a compositional bias: polar residues. Residues Lys-476, Arg-479, and His-508 each coordinate isopentenyl diphosphate. 2 residues coordinate Mg(2+): Asp-515 and Asp-519. The DDXXD 2 motif lies at 515–519 (DDIED). Arg-524 lines the dimethylallyl diphosphate pocket. Arg-525 is an isopentenyl diphosphate binding site. Dimethylallyl diphosphate is bound by residues Lys-602, Thr-603, Gln-638, Asn-645, Lys-655, and Lys-665.

It in the N-terminal section; belongs to the terpene synthase family. The protein in the C-terminal section; belongs to the FPP/GGPP synthase family. In terms of assembly, hexamer. Mg(2+) is required as a cofactor.

The catalysed reaction is isopentenyl diphosphate + (2E,6E)-farnesyl diphosphate = (2E,6E,10E)-geranylgeranyl diphosphate + diphosphate. The enzyme catalyses isopentenyl diphosphate + (2E,6E,10E)-geranylgeranyl diphosphate = (2E,6E,10E,14E)-geranylfarnesyl diphosphate + diphosphate. It carries out the reaction (2E,6E,10E,14E)-geranylfarnesyl diphosphate + H2O = sesterfisherol + diphosphate. Its pathway is secondary metabolite biosynthesis; terpenoid biosynthesis. In terms of biological role, bifunctional terpene synthase; part of the gene cluster that mediates the biosynthesis of sesterfisheric acid. The bifunctional terpene synthase NfSS converts dimethylallyl diphosphate (DMAPP) and isopentenyl diphosphate (IPP) into sesterfisherol. The C-terminal prenyltransferase (PT) domain of NfSS catalyzes formation of geranylfarnesyl pyrophosphate (GFPP), whereas the N-terminal terpene cyclase (TC) domain catalyzes the cyclization of GFPP to sesterfisherol. The cytochrome P450 monooxygenase NfP450 then catalyzes oxidative modifications of sesterfisherol into sesterfisheric acid. The polypeptide is Sesterfisherol synthase (Neosartorya fischeri (strain ATCC 1020 / DSM 3700 / CBS 544.65 / FGSC A1164 / JCM 1740 / NRRL 181 / WB 181) (Aspergillus fischerianus)).